Here is a 429-residue protein sequence, read N- to C-terminus: Glucose-6-phosphate exchanger SLC37A4 (429 aa).

Helical transmembrane passes span 84–104, 105–125, 139–159, 167–187, 219–239, 260–280, 302–322, 329–349, 368–388, and 394–414; these read LLLV…PVFA, ALWF…GKVL, AILS…ATIL, STLA…LLLI, ELLL…VFGV, LVGS…SIAA, GLLL…RVTV, LWIL…IALF, IVGL…STIA, and STAF…FFLL.

Belongs to the major facilitator superfamily. Organophosphate:Pi antiporter (OPA) (TC 2.A.1.4) family. In terms of tissue distribution, mostly expressed in liver and kidney.

Its subcellular location is the endoplasmic reticulum membrane. It catalyses the reaction D-glucose 6-phosphate(in) + phosphate(out) = D-glucose 6-phosphate(out) + phosphate(in). With respect to regulation, inhibited by vanadate and chlorogenic acid. In terms of biological role, inorganic phosphate and glucose-6-phosphate antiporter of the endoplasmic reticulum. Transports cytoplasmic glucose-6-phosphate into the lumen of the endoplasmic reticulum and translocates inorganic phosphate into the opposite direction. Forms with glucose-6-phosphatase the complex responsible for glucose production through glycogenolysis and gluconeogenesis. Hence, it plays a central role in homeostatic regulation of blood glucose levels. This Homo sapiens (Human) protein is Glucose-6-phosphate exchanger SLC37A4.